Here is a 302-residue protein sequence, read N- to C-terminus: Probable histone acetyltransferase Rv0428c (302 aa).

It carries out the reaction L-lysyl-[histone] + acetyl-CoA = N(6)-acetyl-L-lysyl-[histone] + CoA + H(+). Functionally, shows histone acetyl transferase (HAT) activity with recombinant eukaryotic H3 histone expressed in bacteria as substrate and acetyl-CoA as donor. May be involved in survival under stress conditions. This Mycobacterium tuberculosis (strain ATCC 25618 / H37Rv) protein is Probable histone acetyltransferase Rv0428c.